The primary structure comprises 119 residues: MIQKNTLLDVADNSGARKVLCIGLLNGKKSASVGDVIVVSTKLITPRGKVSKGKVYKAVIVRVKKAVRRLDGSVIKFSSNAVVLINDQGDPLGTRVFGPIKKLPFGLFSKVMSLAVEVL.

Belongs to the universal ribosomal protein uL14 family. As to quaternary structure, part of the 50S ribosomal subunit. Forms a cluster with proteins L3 and L19. In the 70S ribosome, L14 and L19 interact and together make contacts with the 16S rRNA in bridges B5 and B8.

Its function is as follows. Binds to 23S rRNA. Forms part of two intersubunit bridges in the 70S ribosome. The chain is Large ribosomal subunit protein uL14 from Ehrlichia chaffeensis (strain ATCC CRL-10679 / Arkansas).